Here is a 388-residue protein sequence, read N- to C-terminus: Zinc finger protein 1 (388 aa).

Residues 1–19 (MSSIPNINWNDPNNGKSNT) show a composition bias toward polar residues. Disordered regions lie at residues 1–120 (MSSI…QQPL), 157–219 (LQQR…QQWD), and 236–311 (SSIQ…KPIT). Over residues 20-38 (SRQSQPQPQLPSNVSPPNS) the composition is skewed to low complexity. Composition is skewed to polar residues over residues 52–67 (YGSS…NPNT) and 88–97 (YPVQQTAQQR). 2 stretches are compositionally biased toward low complexity: residues 102 to 120 (LQQV…QQPL) and 157 to 172 (LQQR…KSQL). Residues 173–203 (NEQNAMMSASTQQYPVQDFTNPYPNAQNPAE) are compositionally biased toward polar residues. Composition is skewed to low complexity over residues 204–217 (QQQQ…QSQQ) and 236–259 (SSIQ…KQQQ). Positions 268 to 278 (KKKPGRKPKLR) are enriched in basic residues. Residues 282 to 294 (ESSSETPQVPKTA) show a composition bias toward polar residues. Residues 318–345 (CLTCRQRKKRCCETRPRCTECTRLRLNC) constitute a DNA-binding region (zn(2)-C6 fungal-type). The disordered stretch occupies residues 348-367 (PKPGTEHKNKPKDQKDDENT). Positions 351 to 367 (GTEHKNKPKDQKDDENT) are enriched in basic and acidic residues.

It is found in the nucleus. In terms of biological role, perhaps a regulatory role. May be involved in transcriptional activation. This Candida albicans (strain WO-1) (Yeast) protein is Zinc finger protein 1 (CZF1).